We begin with the raw amino-acid sequence, 143 residues long: Nucleoside diphosphate kinase (143 aa).

Lys-11, Phe-59, Arg-87, Thr-93, Arg-104, and Asn-114 together coordinate ATP. His-117 acts as the Pros-phosphohistidine intermediate in catalysis.

The protein belongs to the NDK family. As to quaternary structure, homotetramer. Mg(2+) is required as a cofactor.

The protein resides in the cytoplasm. It carries out the reaction a 2'-deoxyribonucleoside 5'-diphosphate + ATP = a 2'-deoxyribonucleoside 5'-triphosphate + ADP. The enzyme catalyses a ribonucleoside 5'-diphosphate + ATP = a ribonucleoside 5'-triphosphate + ADP. Major role in the synthesis of nucleoside triphosphates other than ATP. The ATP gamma phosphate is transferred to the NDP beta phosphate via a ping-pong mechanism, using a phosphorylated active-site intermediate. In Shewanella sp. (strain ANA-3), this protein is Nucleoside diphosphate kinase.